A 120-amino-acid chain; its full sequence is Peptidyl-tRNA hydrolase (120 aa).

This sequence belongs to the PTH2 family.

It is found in the cytoplasm. It catalyses the reaction an N-acyl-L-alpha-aminoacyl-tRNA + H2O = an N-acyl-L-amino acid + a tRNA + H(+). Functionally, the natural substrate for this enzyme may be peptidyl-tRNAs which drop off the ribosome during protein synthesis. The protein is Peptidyl-tRNA hydrolase of Saccharolobus islandicus (strain Y.N.15.51 / Yellowstone #2) (Sulfolobus islandicus).